The chain runs to 449 residues: Putative gustatory receptor 77a (449 aa).

Over 1-27 (MPLPLGDPLALAVSPQLGYIRITAMPR) the chain is Cytoplasmic. The chain crosses the membrane as a helical span at residues 28–50 (WLQLPGMSALGILYSLTRVFGLM). The Extracellular segment spans residues 51–70 (ATANWSPRGIKRVRQSLYLR). The helical transmembrane segment at 71 to 93 (IHGCVMLIFVGCFSPFAFWCIFQ) threads the bilayer. Topologically, residues 94–102 (RMAFLRQNR) are cytoplasmic. A helical membrane pass occupies residues 103–125 (ILLMIGFNRYVLLLVCAFMTLWI). Over 126 to 205 (HCFKQAEIIG…VRRNFMYACS (80 aa)) the chain is Extracellular. The helical transmembrane segment at 206–228 (LVFVSVCQAILQLSLGMYTMAIL) threads the bilayer. Over 229-298 (FLGHLVRHSN…LLKLHRSICS (70 aa)) the chain is Cytoplasmic. A helical membrane pass occupies residues 299 to 321 (LCAVQAVCFLGFVPLECTIHLFF). The Extracellular segment spans residues 322–340 (TYFMKYSKFILRKYGRSFP). The helical transmembrane segment at 341–363 (LNYFAIAFLVGLFTNLLLVILPT) threads the bilayer. Residues 364 to 420 (YYSERRFNCTREIIKGGGLAFPSRITVKQLRHTMHFYGLYLKNVEHVFAVSACGLFK) lie on the Cytoplasmic side of the membrane. Residues 421-443 (LNNAILFCIVGAILEYLMILIQF) form a helical membrane-spanning segment. Residues 444–449 (DKVLNK) lie on the Extracellular side of the membrane.

This sequence belongs to the insect chemoreceptor superfamily. Gustatory receptor (GR) family. Gr77a subfamily. In larvae, is expressed in dorsal pharyngeal sense organ.

It localises to the cell membrane. Its function is as follows. Probable gustatory receptor which mediates acceptance or avoidance behavior, depending on its substrates. The protein is Putative gustatory receptor 77a (Gr77a) of Drosophila melanogaster (Fruit fly).